The chain runs to 339 residues: MKETLDQLMQSALAEIAGAASEDALQELRVRYLGKKGELTAVMKGLGSLSPEERPRMGQMVNTVKDRLETTLEETLQRVRAAAKKERLERERLDVTLPGRTSPLGTKHPISLVIEEISDIFAGLGFQVAEGPEVELDFYNFEALNFPKDHPARDMQDTFFVDDDILLRTHTSPVQVRTMLKHAPPVRIISPGTVYRCDSDATHSPMFHQIEGFMVDKGVTFGDLKGILTNFVNQFFGAGTGVRLRPSFFPFTEPSAEVDIACVMCKGQGCRVCKQSGWLEILGAGMIDPEVYRHVGYDPESISGFAFGMGIERVAMLKYGIGDLRLFFDNDVRFLQQFR.

Mg(2+) is bound at residue E253.

This sequence belongs to the class-II aminoacyl-tRNA synthetase family. Phe-tRNA synthetase alpha subunit type 1 subfamily. In terms of assembly, tetramer of two alpha and two beta subunits. Requires Mg(2+) as cofactor.

The protein localises to the cytoplasm. The enzyme catalyses tRNA(Phe) + L-phenylalanine + ATP = L-phenylalanyl-tRNA(Phe) + AMP + diphosphate + H(+). The protein is Phenylalanine--tRNA ligase alpha subunit of Geobacter sulfurreducens (strain ATCC 51573 / DSM 12127 / PCA).